The primary structure comprises 268 residues: Ethylene-responsive transcription factor ERN1 (268 aa).

A compositionally biased stretch (polar residues) spans 1–21 (MEIQFQQPNMQNQKAGISVTN). The disordered stretch occupies residues 1–36 (MEIQFQQPNMQNQKAGISVTNKGGKFKGRNRNSNNT). The AP2/ERF DNA-binding region spans 38 to 95 (KFVGVRQRPSGRWVAEIKDTTQKIRMWLGTFETAEEAARAYDEAACLLRGSNTRTNFI). Residues 114–154 (NRKGDKKQEDGAVASAPSNSKTTISNTSTITSNDDNKESTL) are disordered. Over residues 131–146 (SNSKTTISNTSTITSN) the composition is skewed to low complexity.

Belongs to the AP2/ERF transcription factor family. ERF subfamily. Expressed in roots, root hairs and leaves. Expressed in root epidermis and root hairs.

The protein resides in the nucleus. In terms of biological role, transcription factor involved in symbiotic nodule signaling in response to rhizobial Nod factors (NFs). Binds to the GCC-box (NF-responsive box) of ENOD11 promoter. Acts as a transcriptional activator of NF-responsive box-containing target gene promoters in root hairs. Functions as a transcriptional regulator required for root infection by symbiotic rhizobia, infection thread (IT) formation and maintenance, and nodule development. Necessary for NF-induced gene expression and spontaneous nodulation activated by CCAMK. Functions downstream of CCAMK to activate nodulation gene expression. Involved in early stages of root nodule development. Functions redundantly with ERN2. Is essential with ERN2 for the initiation of root hair infection, and nodule organogenesis and development. Required for accurate expression of the NF signaling genes ENOD11 and ENOD12. In Medicago truncatula (Barrel medic), this protein is Ethylene-responsive transcription factor ERN1.